The sequence spans 351 residues: MRKIIHVDMDCFFAAVEMRDNPALRDIPIAIGGSRERRGVISTANYPARKFGVRSAMPTGMALKLCPHLTLLPGRFDAYKEASNHIREIFSRYTSRIEPLSLDEAYLDVTDSVHCHGSATLIAQEIRQTIFNELQLTASAGVAPVKFLAKIASDMNKPNGQFVITPAEVPAFLQTLPLAKIPGVGKVSAAKLEAMGLRTCGDVQKCDLVILLKRFGKFGRILWERSQGIDERDVNSERLRKSVGVERTMAEDIHHWSECEAIIERLYPELERRLAKVKPDLLIARQGVKLKFDDFQQTTQEHVWPRLNKADLIATARKTWDERRGGRGVRLVGLHVTLLDPQMERQLVLGL.

Positions 4-185 (IIHVDMDCFF…LPLAKIPGVG (182 aa)) constitute a UmuC domain. Residues Asp8 and Asp103 each contribute to the Mg(2+) site. Glu104 is a catalytic residue.

It belongs to the DNA polymerase type-Y family. Monomer. It depends on Mg(2+) as a cofactor.

The protein localises to the cytoplasm. The catalysed reaction is DNA(n) + a 2'-deoxyribonucleoside 5'-triphosphate = DNA(n+1) + diphosphate. Its function is as follows. Poorly processive, error-prone DNA polymerase involved in untargeted mutagenesis. Copies undamaged DNA at stalled replication forks, which arise in vivo from mismatched or misaligned primer ends. These misaligned primers can be extended by PolIV. Exhibits no 3'-5' exonuclease (proofreading) activity. May be involved in translesional synthesis, in conjunction with the beta clamp from PolIII. The protein is DNA polymerase IV (dinB) of Escherichia coli O6:H1 (strain CFT073 / ATCC 700928 / UPEC).